We begin with the raw amino-acid sequence, 156 residues long: ATP synthase subunit b (156 aa).

Residues 7–27 form a helical membrane-spanning segment; it reads LFAQMVVFLILAWFTMKFVWP.

This sequence belongs to the ATPase B chain family. As to quaternary structure, F-type ATPases have 2 components, F(1) - the catalytic core - and F(0) - the membrane proton channel. F(1) has five subunits: alpha(3), beta(3), gamma(1), delta(1), epsilon(1). F(0) has three main subunits: a(1), b(2) and c(10-14). The alpha and beta chains form an alternating ring which encloses part of the gamma chain. F(1) is attached to F(0) by a central stalk formed by the gamma and epsilon chains, while a peripheral stalk is formed by the delta and b chains.

The protein resides in the cell inner membrane. F(1)F(0) ATP synthase produces ATP from ADP in the presence of a proton or sodium gradient. F-type ATPases consist of two structural domains, F(1) containing the extramembraneous catalytic core and F(0) containing the membrane proton channel, linked together by a central stalk and a peripheral stalk. During catalysis, ATP synthesis in the catalytic domain of F(1) is coupled via a rotary mechanism of the central stalk subunits to proton translocation. Its function is as follows. Component of the F(0) channel, it forms part of the peripheral stalk, linking F(1) to F(0). The protein is ATP synthase subunit b of Paraburkholderia phytofirmans (strain DSM 17436 / LMG 22146 / PsJN) (Burkholderia phytofirmans).